The sequence spans 56 residues: uncharacterized protein (56 aa).

The protein belongs to the archaeal ATPase family.

This is an uncharacterized protein from Methanocaldococcus jannaschii (strain ATCC 43067 / DSM 2661 / JAL-1 / JCM 10045 / NBRC 100440) (Methanococcus jannaschii).